Consider the following 426-residue polypeptide: C4-dicarboxylate transport protein (426 aa).

The next 8 membrane-spanning stretches (helical) occupy residues 8 to 28, 44 to 64, 78 to 98, 148 to 168, 184 to 204, 222 to 242, 297 to 317, and 355 to 375; these read VLYV…HFYP, LIKM…IAGM, LLYF…ATHL, GEIL…AHVG, ILFG…FGAM, LIGT…GFIA, GYSF…LFIA, and AATL…ILGI.

Belongs to the dicarboxylate/amino acid:cation symporter (DAACS) (TC 2.A.23) family.

It localises to the cell inner membrane. In terms of biological role, responsible for the transport of dicarboxylates such as succinate, fumarate, and malate from the periplasm across the membrane. The sequence is that of C4-dicarboxylate transport protein from Paraburkholderia phymatum (strain DSM 17167 / CIP 108236 / LMG 21445 / STM815) (Burkholderia phymatum).